The following is a 326-amino-acid chain: Methyltransferase phqN (326 aa).

Belongs to the class I-like SAM-binding methyltransferase superfamily. Erg6/SMT family.

It functions in the pathway alkaloid biosynthesis. In terms of biological role, methyltransferase; part of the gene cluster that mediates the biosynthesis of paraherquamide, a fungal indole alkaloid that belongs to a family of natural products containing a characteristic bicyclo[2.2.2]diazaoctane core. The first steps in the biosynthesis of paraherquamide is the production of the beta-methyl-proline precursor from L-isoleucine. They require oxidation of a terminally hydroxylated L-isoleucine to the corresponding aldehyde by enzymes which have still to be identified. Spontaneous cyclization and dehydration would yield the 4-methyl pyrolline-5-carboxylic acid, which is then reduced by the pyrroline-5-carboxylate reductase phqD leading to the beta-methyl-proline precursor. The next step of paraherquamide biosynthesis involves coupling of beta-methyl-proline and L-tryptophan by the bimodular NRPS phqB, to produce a monooxopiperazine intermediate. The reductase (R) domain of phqB utilizes NADPH for hydride transfer to reduce the thioester bond of the T domain-tethered linear dipeptide to a hemithioaminal intermediate, which spontaneously cleaves the C-S bond to release the aldehyde product. This compound undergoes spontaneous cyclization and dehydration to give a dienamine which is reverse prenylated at C-2 by the reverse prenyltransferase phqJ. The other prenyltransferase present in the cluster, phqI may be a redundant gene in the pathway. During biosynthetic assembly, the key step to produce the polycyclic core is catalyzed by the bifunctional reductase and intramolecular [4+2] Diels-Alderase, phqE, resulting in formation of the [2.2.2] diazaoctane intermediate preparaherquamide. Following formation of preparaherquamide, an indole 2,3-epoxidation-initiated pinacol-like rearrangement is catalyzed by the phqK FAD-dependent monooxygenase. The prenyltransferase phqA, the cytochrome P450 monooxygenase phqL, and the FAD-linked oxidoreductase phqH (or the cytochrome P450 monooxygenase phqM), are proposed to be involved in the formation of the pyran ring. The FAD-dependent monooxygenase phqK is likely responsible for generation of the spiro-oxindole, and the N-methylation is likely mediated by the phqN methyltransferase leading to the isolable natural product paraherquamide F. However, the order of these biosynthetic steps has still to be determined. In late-stage paraherquamide biosynthesis, the third P450 monooxygenase, phqO, is probably responsible for the C-14 hydroxylation, transforming paraherquamide F to paraherquamide G, and paraherquamide E to the final product paraherquamide A. The expansion from the 6-membered ring pyran (in paraherquamides F and G) to the 7-membered dioxepin ring (in paraherquamides A and E) represents a poorly understood but intriguing process that probably involves the 2-oxoglutarate-dependent dioxygenase phqC. Finally, the remaining members of the paraherquamide cluster, including phqI as well as phqM (or phqH), do not have a clearly prescribed role and appear to be redundant. This is Methyltransferase phqN from Penicillium fellutanum.